A 133-amino-acid chain; its full sequence is UPF0102 protein AB57_1130 (133 aa).

The protein belongs to the UPF0102 family.

This chain is UPF0102 protein AB57_1130, found in Acinetobacter baumannii (strain AB0057).